A 424-amino-acid chain; its full sequence is GTPase Obg (424 aa).

One can recognise an Obg domain in the interval 1-158 (MFVDKARIFV…RWISLELKLL (158 aa)). In terms of domain architecture, OBG-type G spans 159–331 (ADVGLIGFPN…LLKECARVLS (173 aa)). GTP is bound by residues 165-172 (GFPNVGKS), 190-194 (FTTIT), 212-215 (DIPG), 282-285 (NKAD), and 312-314 (SAA). 2 residues coordinate Mg(2+): S172 and T192. The 80-residue stretch at 345–424 (RFVPEDKHFT…LNDFEFEFLK (80 aa)) folds into the OCT domain.

This sequence belongs to the TRAFAC class OBG-HflX-like GTPase superfamily. OBG GTPase family. In terms of assembly, monomer. The cofactor is Mg(2+).

Its subcellular location is the cytoplasm. Functionally, an essential GTPase which binds GTP, GDP and possibly (p)ppGpp with moderate affinity, with high nucleotide exchange rates and a fairly low GTP hydrolysis rate. Plays a role in control of the cell cycle, stress response, ribosome biogenesis and in those bacteria that undergo differentiation, in morphogenesis control. The polypeptide is GTPase Obg (Clostridium acetobutylicum (strain ATCC 824 / DSM 792 / JCM 1419 / IAM 19013 / LMG 5710 / NBRC 13948 / NRRL B-527 / VKM B-1787 / 2291 / W)).